Consider the following 489-residue polypeptide: Retinoblastoma-binding protein 5 homolog (489 aa).

6 WD repeats span residues 22 to 63, 64 to 103, 147 to 187, 195 to 234, 248 to 290, and 292 to 330; these read DCIS…KIIS, AHVH…LEHK, DSDG…VVAS, SSAT…TLGK, VNKT…KILH, and TKGE…NWSA. The interval 451–489 is disordered; that stretch reads DVSLPDAPTDETHPLISSKASKDKQQPVGGKKAAGRTKK.

As to quaternary structure, core component of several methyltransferase-containing complexes. Component of the SET1 complex, composed at least of the catalytic subunit Set1, wds/WDR5, Wdr82, Rbbp5, ash2, Cfp1/CXXC1, hcf and Dpy-30L1. Component of the MLL3/4 complex composed at least of the catalytic subunit trr, ash2, Rbbp5, Dpy-30L1, wds, hcf, ptip, Pa1, Utx, Lpt and Ncoa6.

Its subcellular location is the nucleus. Its function is as follows. Component of the SET1 complex that specifically di- and trimethylates 'Lys-4' of histone H3 and of the MLL3/4 complex which also methylates histone H3 'Lys-4'. This is Retinoblastoma-binding protein 5 homolog from Drosophila melanogaster (Fruit fly).